The chain runs to 200 residues: Crossover junction endodeoxyribonuclease RuvC (200 aa).

Active-site residues include Asp18, Glu78, and Asp151. Asp18, Glu78, and Asp151 together coordinate Mg(2+).

It belongs to the RuvC family. Homodimer which binds Holliday junction (HJ) DNA. The HJ becomes 2-fold symmetrical on binding to RuvC with unstacked arms; it has a different conformation from HJ DNA in complex with RuvA. In the full resolvosome a probable DNA-RuvA(4)-RuvB(12)-RuvC(2) complex forms which resolves the HJ. The cofactor is Mg(2+).

Its subcellular location is the cytoplasm. It catalyses the reaction Endonucleolytic cleavage at a junction such as a reciprocal single-stranded crossover between two homologous DNA duplexes (Holliday junction).. The RuvA-RuvB-RuvC complex processes Holliday junction (HJ) DNA during genetic recombination and DNA repair. Endonuclease that resolves HJ intermediates. Cleaves cruciform DNA by making single-stranded nicks across the HJ at symmetrical positions within the homologous arms, yielding a 5'-phosphate and a 3'-hydroxyl group; requires a central core of homology in the junction. The consensus cleavage sequence is 5'-(A/T)TT(C/G)-3'. Cleavage occurs on the 3'-side of the TT dinucleotide at the point of strand exchange. HJ branch migration catalyzed by RuvA-RuvB allows RuvC to scan DNA until it finds its consensus sequence, where it cleaves and resolves the cruciform DNA. The protein is Crossover junction endodeoxyribonuclease RuvC of Cytophaga hutchinsonii (strain ATCC 33406 / DSM 1761 / CIP 103989 / NBRC 15051 / NCIMB 9469 / D465).